An 837-amino-acid chain; its full sequence is Phosphatidylinositol-glycan-specific phospholipase D (837 aa).

The signal sequence occupies residues 1–23; it reads MSAGRLWSSLLLLLPLFCSKSSS. Residues Asn-94, Asn-267, Asn-287, Asn-303, and Asn-317 are each glycosylated (N-linked (GlcNAc...) asparagine). 7 FG-GAP repeats span residues 364–425, 431–492, 494–554, 561–619, 629–689, 701–767, and 785–837; these read SPSA…GLPP, NKEG…GRLS, SPNV…RNDK, EADW…SLGK, QSTI…GATR, ALLS…TLGD, and QYVL…FSSD. N-linked (GlcNAc...) asparagine glycans are attached at residues Asn-477, Asn-496, Asn-586, Asn-599, and Asn-655.

Belongs to the GPLD1 family. Monomer. In terms of tissue distribution, widely expressed.

It localises to the secreted. The catalysed reaction is a 6-(alpha-D-glucosaminyl)-1-(1,2-diacyl-sn-glycero-3-phospho)-1D-myo-inositol + H2O = 6-(alpha-D-glucosaminyl)-1D-myo-inositol + a 1,2-diacyl-sn-glycero-3-phosphate + H(+). This protein hydrolyzes the inositol phosphate linkage in proteins anchored by phosphatidylinositol glycans (GPI-anchor) thus releasing these proteins from the membrane. The polypeptide is Phosphatidylinositol-glycan-specific phospholipase D (Gpld1) (Mus musculus (Mouse)).